Reading from the N-terminus, the 626-residue chain is Probable potassium transport system protein Kup (626 aa).

12 helical membrane passes run 13–33, 53–73, 102–122, 138–158, 169–189, 207–227, 248–268, 277–297, 338–358, 367–387, 399–419, and 421–441; these read VALM…SPLY, VLSI…VLLI, FFVV…MITP, HTLD…LFAI, LFGP…GWQV, FVFE…LALT, WFSM…ALLL, PFFL…ATVA, IYLP…VITF, AYGF…FAVL, WMLV…ANIF, and IHEG…LMMT.

It belongs to the HAK/KUP transporter (TC 2.A.72) family.

The protein resides in the cell inner membrane. It carries out the reaction K(+)(in) + H(+)(in) = K(+)(out) + H(+)(out). Functionally, transport of potassium into the cell. Likely operates as a K(+):H(+) symporter. This chain is Probable potassium transport system protein Kup, found in Bordetella avium (strain 197N).